Here is a 74-residue protein sequence, read N- to C-terminus: Omwaprin-b (74 aa).

A signal peptide spans 1-24; it reads MSSGGLLLLLGLLTLWEVLTPVSS. The WAP domain occupies 27 to 71; sequence RPKKPGLCPPRPQKPCVKECKNDWSCPGQQKCCNYGCIDECRDPI. 4 disulfides stabilise this stretch: C34/C59, C42/C63, C46/C58, and C52/C67.

Belongs to the venom waprin family. As to expression, expressed by the venom gland.

Its subcellular location is the secreted. Damages membranes of susceptible bacteria. Has antibacterial activity against the Gram-positive bacteria B.megaterium and S.warneri. After 45 minutes of treatment with this protein, B.megaterium have no visible pili and are smooth. Has no antibacterial activity against the Gram-positive bacteria B.thuringiensis, S.aureus, S.clavuligerus and B. anthracis, or the Gram-negative bacteria E.coli and A.tumefaciens. Has no hemolytic activity. Does not inhibit the proteinases elastase and cathepsin G. Is not toxic to mice. In Oxyuranus microlepidotus (Inland taipan), this protein is Omwaprin-b.